The chain runs to 255 residues: Type III pantothenate kinase (255 aa).

Residue 6–13 coordinates ATP; that stretch reads DIGNTNIK. Residue 107–110 participates in substrate binding; it reads GADR. Asp-109 functions as the Proton acceptor in the catalytic mechanism. Position 132 (Thr-132) interacts with ATP. Position 184 (Thr-184) interacts with substrate.

This sequence belongs to the type III pantothenate kinase family. As to quaternary structure, homodimer. NH4(+) is required as a cofactor. The cofactor is K(+).

The protein localises to the cytoplasm. The catalysed reaction is (R)-pantothenate + ATP = (R)-4'-phosphopantothenate + ADP + H(+). Its pathway is cofactor biosynthesis; coenzyme A biosynthesis; CoA from (R)-pantothenate: step 1/5. Catalyzes the phosphorylation of pantothenate (Pan), the first step in CoA biosynthesis. In Roseiflexus castenholzii (strain DSM 13941 / HLO8), this protein is Type III pantothenate kinase.